We begin with the raw amino-acid sequence, 713 residues long: Histone-lysine N-methyltransferase SETDB2 (713 aa).

Residues 78 to 109 (PEVNTHRSNHTPVTQSEQENKSSAVPSASCDN) form a disordered region. Polar residues predominate over residues 87-109 (HTPVTQSEQENKSSAVPSASCDN). Residues 161 to 233 (LSLKGENPLQ…DNFSFNTYVQ (73 aa)) form the MBD domain. One can recognise a Pre-SET domain in the interval 294 to 367 (DSCDCSEGCI…MCQNRVIQHG (74 aa)). Residues Cys296, Cys298, Cys302, Cys308, Cys310, Cys348, Cys352, Cys354, and Cys359 each contribute to the Zn(2+) site. The 319-residue stretch at 370-688 (VRLQVFKSEK…ARTELTWDYG (319 aa)) folds into the SET domain. Position 380 to 382 (380 to 382 (KGW)) interacts with S-adenosyl-L-methionine. Composition is skewed to basic and acidic residues over residues 511-534 (EDKN…HEDL) and 579-592 (TKQV…KSQE). Disordered stretches follow at residues 511 to 549 (EDKN…QLTE) and 579 to 608 (TKQV…CDEE). S-adenosyl-L-methionine is bound by residues Arg642 and 645 to 646 (NH). 4 residues coordinate Zn(2+): Cys648, Cys701, Cys703, and Cys708.

Belongs to the class V-like SAM-binding methyltransferase superfamily.

Its subcellular location is the nucleus. The protein localises to the chromosome. It carries out the reaction N(6),N(6)-dimethyl-L-lysyl(9)-[histone H3] + S-adenosyl-L-methionine = N(6),N(6),N(6)-trimethyl-L-lysyl(9)-[histone H3] + S-adenosyl-L-homocysteine + H(+). Its function is as follows. Histone methyltransferase involved in left-right axis specification in early development and mitosis. Specifically trimethylates 'Lys-9' of histone H3 (H3K9me3). H3K9me3 is a specific tag for epigenetic transcriptional repression that recruits HP1 (CBX1, CBX3 and/or CBX5) proteins to methylated histones. Contributes to H3K9me3 in both the interspersed repetitive elements and centromere-associated repeats. Plays a role in chromosome condensation and segregation during mitosis. This is Histone-lysine N-methyltransferase SETDB2 (Setdb2) from Mus musculus (Mouse).